The chain runs to 534 residues: Prolyl 4-hydroxylase subunit alpha-1 (534 aa).

Positions 1 to 17 (MIWGVLMMGILLPQCSA) are cleaved as a signal peptide. N-linked (GlcNAc...) asparagine glycosylation occurs at Asn-113. The stretch at 205–238 (VSVLDYLSYAVYQQGDLDKALLLTKKLLELDPEH) is one TPR repeat. Asn-259 is a glycosylation site (N-linked (GlcNAc...) asparagine). In terms of domain architecture, Fe2OG dioxygenase spans 411 to 519 (TAEELQVANY…KWVSNKWLHE (109 aa)). His-429, Asp-431, and His-500 together coordinate Fe cation. A 2-oxoglutarate-binding site is contributed by Lys-510.

Belongs to the P4HA family. As to quaternary structure, heterotetramer of two alpha-1 chains and two beta chains (P4HB)(the beta chain is the multi-functional PDI), where P4HB plays the role of a structural subunit; this tetramer catalyzes the formation of 4-hydroxyproline in collagen. Fe(2+) serves as cofactor. The cofactor is L-ascorbate.

It localises to the endoplasmic reticulum lumen. The enzyme catalyses L-prolyl-[collagen] + 2-oxoglutarate + O2 = trans-4-hydroxy-L-prolyl-[collagen] + succinate + CO2. Catalyzes the post-translational formation of 4-hydroxyproline in -Xaa-Pro-Gly- sequences in collagens and other proteins. The chain is Prolyl 4-hydroxylase subunit alpha-1 (P4ha1) from Rattus norvegicus (Rat).